The chain runs to 338 residues: Lipoate-protein ligase A (338 aa).

The 188-residue stretch at 29–216 folds into the BPL/LPL catalytic domain; sequence PATQRVLFLW…AFFAHYGERV (188 aa). ATP-binding positions include R71, 76–79, and K134; that span reads GAVF. Position 134 (K134) interacts with (R)-lipoate.

Belongs to the LplA family. In terms of assembly, monomer.

It localises to the cytoplasm. It carries out the reaction L-lysyl-[lipoyl-carrier protein] + (R)-lipoate + ATP = N(6)-[(R)-lipoyl]-L-lysyl-[lipoyl-carrier protein] + AMP + diphosphate + H(+). It functions in the pathway protein modification; protein lipoylation via exogenous pathway; protein N(6)-(lipoyl)lysine from lipoate: step 1/2. It participates in protein modification; protein lipoylation via exogenous pathway; protein N(6)-(lipoyl)lysine from lipoate: step 2/2. Catalyzes both the ATP-dependent activation of exogenously supplied lipoate to lipoyl-AMP and the transfer of the activated lipoyl onto the lipoyl domains of lipoate-dependent enzymes. In Escherichia fergusonii (strain ATCC 35469 / DSM 13698 / CCUG 18766 / IAM 14443 / JCM 21226 / LMG 7866 / NBRC 102419 / NCTC 12128 / CDC 0568-73), this protein is Lipoate-protein ligase A.